A 365-amino-acid polypeptide reads, in one-letter code: Carbamoyl phosphate synthase small chain (365 aa).

CPSase regions lie at residues 1-166 (MKRQ…PSPG) and 1-169 (MKRQ…GRGH). L-glutamine-binding residues include Ser45, Gly218, and Gly220. One can recognise a Glutamine amidotransferase type-1 domain in the interval 170–357 (RVVLVDFGMK…LTMIENFKKE (188 aa)). The active-site Nucleophile is the Cys245. The L-glutamine site is built by Leu246, Gln249, Asn287, Gly289, and Tyr290. Residues His330 and Glu332 contribute to the active site.

It belongs to the CarA family. In terms of assembly, composed of two chains; the small (or glutamine) chain promotes the hydrolysis of glutamine to ammonia, which is used by the large (or ammonia) chain to synthesize carbamoyl phosphate. Tetramer of heterodimers (alpha,beta)4.

The enzyme catalyses hydrogencarbonate + L-glutamine + 2 ATP + H2O = carbamoyl phosphate + L-glutamate + 2 ADP + phosphate + 2 H(+). The catalysed reaction is L-glutamine + H2O = L-glutamate + NH4(+). The protein operates within amino-acid biosynthesis; L-arginine biosynthesis; carbamoyl phosphate from bicarbonate: step 1/1. It participates in pyrimidine metabolism; UMP biosynthesis via de novo pathway; (S)-dihydroorotate from bicarbonate: step 1/3. Its function is as follows. Small subunit of the glutamine-dependent carbamoyl phosphate synthetase (CPSase). CPSase catalyzes the formation of carbamoyl phosphate from the ammonia moiety of glutamine, carbonate, and phosphate donated by ATP, constituting the first step of 2 biosynthetic pathways, one leading to arginine and/or urea and the other to pyrimidine nucleotides. The small subunit (glutamine amidotransferase) binds and cleaves glutamine to supply the large subunit with the substrate ammonia. In Bacillus cereus (strain ZK / E33L), this protein is Carbamoyl phosphate synthase small chain.